A 72-amino-acid chain; its full sequence is UPF0352 protein Patl_3379 (72 aa).

It belongs to the UPF0352 family.

This is UPF0352 protein Patl_3379 from Pseudoalteromonas atlantica (strain T6c / ATCC BAA-1087).